The following is a 762-amino-acid chain: 5-methyltetrahydropteroyltriglutamate--homocysteine methyltransferase (762 aa).

Residues 17-20 (REWK) and Lys111 contribute to the 5-methyltetrahydropteroyltri-L-glutamate site. Residues 435-437 (IGS) and Glu488 each bind L-homocysteine. L-methionine is bound by residues 435–437 (IGS) and Glu488. 5-methyltetrahydropteroyltri-L-glutamate contacts are provided by residues 519–520 (RC) and Trp565. Asp603 is an L-homocysteine binding site. Position 603 (Asp603) interacts with L-methionine. Glu609 provides a ligand contact to 5-methyltetrahydropteroyltri-L-glutamate. His645, Cys647, and Glu669 together coordinate Zn(2+). The active-site Proton donor is the His698. Cys730 lines the Zn(2+) pocket.

Belongs to the vitamin-B12 independent methionine synthase family. The cofactor is Zn(2+).

It catalyses the reaction 5-methyltetrahydropteroyltri-L-glutamate + L-homocysteine = tetrahydropteroyltri-L-glutamate + L-methionine. It participates in amino-acid biosynthesis; L-methionine biosynthesis via de novo pathway; L-methionine from L-homocysteine (MetE route): step 1/1. Functionally, catalyzes the transfer of a methyl group from 5-methyltetrahydrofolate to homocysteine resulting in methionine formation. The polypeptide is 5-methyltetrahydropteroyltriglutamate--homocysteine methyltransferase (Bacillus cereus (strain ZK / E33L)).